Consider the following 393-residue polypeptide: NAD(P)H-quinone oxidoreductase subunit H, chloroplastic (393 aa).

Belongs to the complex I 49 kDa subunit family. In terms of assembly, NDH is composed of at least 16 different subunits, 5 of which are encoded in the nucleus.

The protein localises to the plastid. It localises to the chloroplast thylakoid membrane. It carries out the reaction a plastoquinone + NADH + (n+1) H(+)(in) = a plastoquinol + NAD(+) + n H(+)(out). The catalysed reaction is a plastoquinone + NADPH + (n+1) H(+)(in) = a plastoquinol + NADP(+) + n H(+)(out). Functionally, NDH shuttles electrons from NAD(P)H:plastoquinone, via FMN and iron-sulfur (Fe-S) centers, to quinones in the photosynthetic chain and possibly in a chloroplast respiratory chain. The immediate electron acceptor for the enzyme in this species is believed to be plastoquinone. Couples the redox reaction to proton translocation, and thus conserves the redox energy in a proton gradient. The chain is NAD(P)H-quinone oxidoreductase subunit H, chloroplastic from Populus alba (White poplar).